Reading from the N-terminus, the 439-residue chain is MSTTSSHSNVVGVHYRVGKKIGEGSFGMLFQGVNLINNQPIALKFESRKSEVPQLRDEYLTYKLLMGLPGIPSVYYYGQEGMYNLLVMDLLGPSLEDLFDYCGRRFSPKTVAMIAKQMITRIQSVHERHFIYRDIKPDNFLIGFPGSKTENVIYAVDFGMAKQYRDPKTHVHRPYNEHKSLSGTARYMSINTHLGREQSRRDDLESMGHVFMYFLRGSLPWQGLKAATNKQKYEKIGEKKQVTPLKELCEGYPKEFLQYMIYARNLGYEEAPDYDYLRSLFDSLLLRINETDDGKYDWTLLNNGKGWQYSAAKQHVVQRRHTQGTNNRRQSTIPPYARTRQNLLSSPSKQTPVNNVVDASVATQKDGIPGKAASPQVQQQQQTSSAQQQQPQRVEQPAPQTTQPTQVDTQQAAKPAPSKEKSRKKFHLRLLSCCISKQE.

The region spanning 15-286 is the Protein kinase domain; the sequence is YRVGKKIGEG…LRSLFDSLLL (272 aa). Residues 21 to 29 and Lys44 each bind ATP; that span reads IGEGSFGML. Asp134 (proton acceptor) is an active-site residue. The interval 366–426 is disordered; it reads DGIPGKAASP…PSKEKSRKKF (61 aa). The segment covering 372-413 has biased composition (low complexity); the sequence is AASPQVQQQQQTSSAQQQQPQRVEQPAPQTTQPTQVDTQQAA.

This sequence belongs to the protein kinase superfamily. CK1 Ser/Thr protein kinase family. Casein kinase I subfamily.

It is found in the cytoplasm. The catalysed reaction is L-seryl-[protein] + ATP = O-phospho-L-seryl-[protein] + ADP + H(+). It carries out the reaction L-threonyl-[protein] + ATP = O-phospho-L-threonyl-[protein] + ADP + H(+). In terms of biological role, casein kinases are operationally defined by their preferential utilization of acidic proteins such as caseins as substrates. The sequence is that of Casein kinase I homolog 3 (cki3) from Schizosaccharomyces pombe (strain 972 / ATCC 24843) (Fission yeast).